Here is an 840-residue protein sequence, read N- to C-terminus: Leucine--tRNA ligase (840 aa).

The 'HIGH' region signature appears at 44 to 55; the sequence is PYPSANGLHVGH. A 'KMSKS' region motif is present at residues 617–621; it reads KMSKS. ATP is bound at residue lysine 620.

Belongs to the class-I aminoacyl-tRNA synthetase family.

The protein resides in the cytoplasm. It carries out the reaction tRNA(Leu) + L-leucine + ATP = L-leucyl-tRNA(Leu) + AMP + diphosphate. This is Leucine--tRNA ligase from Borreliella burgdorferi (strain ZS7) (Borrelia burgdorferi).